Consider the following 494-residue polypeptide: Aspartyl/glutamyl-tRNA(Asn/Gln) amidotransferase subunit B (494 aa).

It belongs to the GatB/GatE family. GatB subfamily. Heterotrimer of A, B and C subunits.

It catalyses the reaction L-glutamyl-tRNA(Gln) + L-glutamine + ATP + H2O = L-glutaminyl-tRNA(Gln) + L-glutamate + ADP + phosphate + H(+). It carries out the reaction L-aspartyl-tRNA(Asn) + L-glutamine + ATP + H2O = L-asparaginyl-tRNA(Asn) + L-glutamate + ADP + phosphate + 2 H(+). Allows the formation of correctly charged Asn-tRNA(Asn) or Gln-tRNA(Gln) through the transamidation of misacylated Asp-tRNA(Asn) or Glu-tRNA(Gln) in organisms which lack either or both of asparaginyl-tRNA or glutaminyl-tRNA synthetases. The reaction takes place in the presence of glutamine and ATP through an activated phospho-Asp-tRNA(Asn) or phospho-Glu-tRNA(Gln). The polypeptide is Aspartyl/glutamyl-tRNA(Asn/Gln) amidotransferase subunit B (Rhodopseudomonas palustris (strain BisB5)).